The chain runs to 72 residues: UPF0154 protein BPUM_1692 (72 aa).

Residues 4–24 form a helical membrane-spanning segment; the sequence is WVVILVGVVALLAGVALGFFI.

It belongs to the UPF0154 family.

The protein resides in the cell membrane. This is UPF0154 protein BPUM_1692 from Bacillus pumilus (strain SAFR-032).